A 72-amino-acid chain; its full sequence is High-potential iron-sulfur protein isozyme 1 (72 aa).

N-carbamoylalanine; partial is present on alanine 1. [4Fe-4S] cluster is bound by residues cysteine 34, cysteine 37, cysteine 51, and cysteine 65.

The protein belongs to the high-potential iron-sulfur protein (HiPIP) family. As to quaternary structure, homodimer.

Specific class of high-redox-potential 4Fe-4S ferredoxins. Functions in anaerobic electron transport in most purple and in some other photosynthetic bacteria and in at least one genus (Paracoccus) of halophilic, denitrifying bacteria. This Ectothiorhodospira mobilis protein is High-potential iron-sulfur protein isozyme 1.